Consider the following 86-residue polypeptide: Small ribosomal subunit protein uS17 (86 aa).

Belongs to the universal ribosomal protein uS17 family. As to quaternary structure, part of the 30S ribosomal subunit.

Functionally, one of the primary rRNA binding proteins, it binds specifically to the 5'-end of 16S ribosomal RNA. The sequence is that of Small ribosomal subunit protein uS17 from Streptococcus pyogenes serotype M3 (strain ATCC BAA-595 / MGAS315).